The chain runs to 205 residues: Small ribosomal subunit protein uS4 (205 aa).

Residues 1 to 49 (MSKRQSAKYKLDRRMGENIWGRPKSPVNRREYGPGQHGQRRKGKLSDFG) form a disordered region. Residues 94–157 (SRLDAIVFRA…KQLTVVLESV (64 aa)) enclose the S4 RNA-binding domain.

It belongs to the universal ribosomal protein uS4 family. Part of the 30S ribosomal subunit. Contacts protein S5. The interaction surface between S4 and S5 is involved in control of translational fidelity.

Its function is as follows. One of the primary rRNA binding proteins, it binds directly to 16S rRNA where it nucleates assembly of the body of the 30S subunit. With S5 and S12 plays an important role in translational accuracy. The protein is Small ribosomal subunit protein uS4 of Chelativorans sp. (strain BNC1).